The primary structure comprises 254 residues: Trypsin (254 aa).

A signal peptide spans 1 to 16 (MLRFIAVFALVNCALA). Positions 17–26 (GTLPNDLDGR) are cleaved as a propeptide — activation peptide. The Peptidase S1 domain occupies 27–252 (IVNGVDTTIE…VRSWIEKTAK (226 aa)). C53 and C69 are joined by a disulfide. Catalysis depends on charge relay system residues H68 and D113. Intrachain disulfides connect C154-C158, C178-C195, and C204-C228. Catalysis depends on S208, which acts as the Charge relay system.

Belongs to the peptidase S1 family.

Its subcellular location is the secreted. The protein resides in the extracellular space. The enzyme catalyses Preferential cleavage: Arg-|-Xaa, Lys-|-Xaa.. In terms of biological role, involved in digestion of a protein meal. The polypeptide is Trypsin (Sarcophaga bullata (Grey flesh fly)).